Here is a 766-residue protein sequence, read N- to C-terminus: 5-methyltetrahydropteroyltriglutamate--homocysteine methyltransferase (766 aa).

Residues 16 to 19 and lysine 119 each bind 5-methyltetrahydropteroyltri-L-glutamate; that span reads RELK. L-homocysteine-binding positions include 440–442 and glutamate 493; that span reads IGS. Residues 440–442 and glutamate 493 contribute to the L-methionine site; that span reads IGS. 5-methyltetrahydropteroyltri-L-glutamate is bound by residues 524–525 and tryptophan 570; that span reads RC. Aspartate 608 contacts L-homocysteine. Aspartate 608 is a binding site for L-methionine. Residue glutamate 614 participates in 5-methyltetrahydropteroyltri-L-glutamate binding. Histidine 650, cysteine 652, and glutamate 674 together coordinate Zn(2+). Residue histidine 703 is the Proton donor of the active site. Cysteine 735 is a binding site for Zn(2+).

It belongs to the vitamin-B12 independent methionine synthase family. Zn(2+) is required as a cofactor.

The catalysed reaction is 5-methyltetrahydropteroyltri-L-glutamate + L-homocysteine = tetrahydropteroyltri-L-glutamate + L-methionine. It functions in the pathway amino-acid biosynthesis; L-methionine biosynthesis via de novo pathway; L-methionine from L-homocysteine (MetE route): step 1/1. Catalyzes the transfer of a methyl group from 5-methyltetrahydrofolate to homocysteine resulting in methionine formation. The polypeptide is 5-methyltetrahydropteroyltriglutamate--homocysteine methyltransferase (Pseudomonas aeruginosa (strain ATCC 15692 / DSM 22644 / CIP 104116 / JCM 14847 / LMG 12228 / 1C / PRS 101 / PAO1)).